The primary structure comprises 64 residues: Large ribosomal subunit protein uL29 (64 aa).

Belongs to the universal ribosomal protein uL29 family.

This is Large ribosomal subunit protein uL29 from Thiobacillus denitrificans (strain ATCC 25259 / T1).